We begin with the raw amino-acid sequence, 147 residues long: Large ribosomal subunit protein uL15 (147 aa).

Residues 20 to 54 (GRGIGSGKGKTSGKGHKGQKARGTGKVHPWFEGGQ) form a disordered region. A compositionally biased stretch (basic residues) spans 30–44 (TSGKGHKGQKARGTG).

Belongs to the universal ribosomal protein uL15 family. As to quaternary structure, part of the 50S ribosomal subunit.

Its function is as follows. Binds to the 23S rRNA. The sequence is that of Large ribosomal subunit protein uL15 from Thermosipho africanus (strain TCF52B).